Here is a 410-residue protein sequence, read N- to C-terminus: Multidrug resistance protein MdtA (410 aa).

An N-terminal signal peptide occupies residues 1-21; the sequence is MNNRYPVMKKGLIVLVVIAVA. A disordered region spans residues 36 to 56; the sequence is SDGDLSGQSAHGKRGNGAHKP.

This sequence belongs to the membrane fusion protein (MFP) (TC 8.A.1) family. In terms of assembly, part of a tripartite efflux system composed of MdtA, MdtB and MdtC.

It localises to the cell inner membrane. This Pantoea ananatis (strain AJ13355) protein is Multidrug resistance protein MdtA.